The chain runs to 114 residues: T cell receptor beta variable 10-2 (114 aa).

An N-terminal signal peptide occupies residues 1-21 (MGTRLFFYVALCLLWAGHRDA). One can recognise an Ig-like domain in the interval 22 to 114 (GITQSPRYKI…TSVYFCASSE (93 aa)). The cysteines at positions 42 and 110 are disulfide-linked.

In terms of assembly, alpha-beta TR is a heterodimer composed of an alpha and beta chain; disulfide-linked. The alpha-beta TR is associated with the transmembrane signaling CD3 coreceptor proteins to form the TR-CD3 (TcR or TCR). The assembly of alpha-beta TR heterodimers with CD3 occurs in the endoplasmic reticulum where a single alpha-beta TR heterodimer associates with one CD3D-CD3E heterodimer, one CD3G-CD3E heterodimer and one CD247 homodimer forming a stable octameric structure. CD3D-CD3E and CD3G-CD3E heterodimers preferentially associate with TR alpha and TR beta chains, respectively. The association of the CD247 homodimer is the last step of TcR assembly in the endoplasmic reticulum and is required for transport to the cell surface.

The protein resides in the cell membrane. In terms of biological role, v region of the variable domain of T cell receptor (TR) beta chain that participates in the antigen recognition. Alpha-beta T cell receptors are antigen specific receptors which are essential to the immune response and are present on the cell surface of T lymphocytes. Recognize peptide-major histocompatibility (MH) (pMH) complexes that are displayed by antigen presenting cells (APC), a prerequisite for efficient T cell adaptive immunity against pathogens. Binding of alpha-beta TR to pMH complex initiates TR-CD3 clustering on the cell surface and intracellular activation of LCK that phosphorylates the ITAM motifs of CD3G, CD3D, CD3E and CD247 enabling the recruitment of ZAP70. In turn ZAP70 phosphorylates LAT, which recruits numerous signaling molecules to form the LAT signalosome. The LAT signalosome propagates signal branching to three major signaling pathways, the calcium, the mitogen-activated protein kinase (MAPK) kinase and the nuclear factor NF-kappa-B (NF-kB) pathways, leading to the mobilization of transcription factors that are critical for gene expression and essential for T cell growth and differentiation. The T cell repertoire is generated in the thymus, by V-(D)-J rearrangement. This repertoire is then shaped by intrathymic selection events to generate a peripheral T cell pool of self-MH restricted, non-autoaggressive T cells. Post-thymic interaction of alpha-beta TR with the pMH complexes shapes TR structural and functional avidity. This chain is T cell receptor beta variable 10-2, found in Homo sapiens (Human).